The primary structure comprises 71 residues: Protein translocase subunit SecE (71 aa).

Residues 43–63 (VAGVGILAVGAIGFIIYVLLT) form a helical membrane-spanning segment.

The protein belongs to the SecE/SEC61-gamma family. In terms of assembly, component of the Sec protein translocase complex. Heterotrimer consisting of SecY (alpha), SecG (beta) and SecE (gamma) subunits. The heterotrimers can form oligomers, although 1 heterotrimer is thought to be able to translocate proteins. Interacts with the ribosome. May interact with SecDF, and other proteins may be involved.

The protein localises to the cell membrane. Functionally, essential subunit of the Sec protein translocation channel SecYEG. Clamps together the 2 halves of SecY. May contact the channel plug during translocation. In Methanosarcina barkeri (strain Fusaro / DSM 804), this protein is Protein translocase subunit SecE.